The chain runs to 666 residues: Mitogen-activated protein kinase kinase kinase ANP1 (666 aa).

A Protein kinase domain is found at Trp-69–Val-331. ATP is bound by residues Ile-75–Val-83 and Lys-98. Positions Leu-101–His-131 form a coiled coil. Residues Lys-109 and Lys-111 each participate in a glycyl lysine isopeptide (Lys-Gly) (interchain with G-Cter in ubiquitin) cross-link. Asp-197 acts as the Proton acceptor in catalysis. Over residues Lys-452–Ser-464 the composition is skewed to basic and acidic residues. Disordered stretches follow at residues Lys-452–Glu-481, Gly-536–Ser-592, and Gln-635–Lys-666. Low complexity predominate over residues Leu-538–Arg-558. A compositionally biased stretch (polar residues) spans Thr-560–Pro-569. A coiled-coil region spans residues Lys-620–Leu-643. Positions Pro-647–Arg-660 are enriched in basic and acidic residues.

This sequence belongs to the protein kinase superfamily. STE Ser/Thr protein kinase family. MAP kinase kinase kinase subfamily. Expressed in roots, inflorescence stems, flower buds and flowers. Low amount in rosette and cauline leaves.

It catalyses the reaction L-seryl-[protein] + ATP = O-phospho-L-seryl-[protein] + ADP + H(+). The enzyme catalyses L-threonyl-[protein] + ATP = O-phospho-L-threonyl-[protein] + ADP + H(+). Functionally, may be involved in an oxidative stress-mediated signaling cascade that phosphorylates downstream MAP kinases MPK3 and MPK6. May suppress auxin signaling that promotes cell cycle. Functionally redundant to ANP2 and ANP3 in the positive regulation of cytokinesis. The protein is Mitogen-activated protein kinase kinase kinase ANP1 (ANP1) of Arabidopsis thaliana (Mouse-ear cress).